The following is a 302-amino-acid chain: tRNA-cytidine(32) 2-sulfurtransferase (302 aa).

The short motif at 45 to 50 (SGGKDS) is the PP-loop motif element. [4Fe-4S] cluster-binding residues include C120, C123, and C211.

Belongs to the TtcA family. As to quaternary structure, homodimer. The cofactor is Mg(2+). [4Fe-4S] cluster is required as a cofactor.

It localises to the cytoplasm. The catalysed reaction is cytidine(32) in tRNA + S-sulfanyl-L-cysteinyl-[cysteine desulfurase] + AH2 + ATP = 2-thiocytidine(32) in tRNA + L-cysteinyl-[cysteine desulfurase] + A + AMP + diphosphate + H(+). It functions in the pathway tRNA modification. Functionally, catalyzes the ATP-dependent 2-thiolation of cytidine in position 32 of tRNA, to form 2-thiocytidine (s(2)C32). The sulfur atoms are provided by the cysteine/cysteine desulfurase (IscS) system. This chain is tRNA-cytidine(32) 2-sulfurtransferase, found in Aeromonas salmonicida (strain A449).